Reading from the N-terminus, the 476-residue chain is C-terminal-binding protein (476 aa).

Residues serine 100, 180-185, aspartate 204, 237-243, 264-266, and aspartate 290 each bind NAD(+); these read VGLGRI, CTLNEHN, and TAR. Arginine 266 is a catalytic residue. Glutamate 295 is an active-site residue. Histidine 315 serves as the catalytic Proton donor. 315–318 is a binding site for NAD(+); the sequence is HAAF. Positions 445 to 476 are disordered; that stretch reads VSSQSPLSAPDPNNHLSSSIKTEVKAESTEAP. A compositionally biased stretch (basic and acidic residues) spans 466–476; that stretch reads TEVKAESTEAP.

Belongs to the D-isomer specific 2-hydroxyacid dehydrogenase family. As to quaternary structure, homodimer. Interacts with hairy (hry), knirps (kni), snail (sna), and Enhancer of split m-delta (HLHm-delta). Complex may be involved in transcriptional repression. Also interacts with adenovirus E1A protein.

It localises to the nucleus. In terms of biological role, corepressor targeting diverse transcription regulators. Hairy-interacting protein required for embryonic segmentation and hairy-mediated transcriptional repression. This chain is C-terminal-binding protein (CtBP), found in Drosophila melanogaster (Fruit fly).